A 300-amino-acid chain; its full sequence is Cation-efflux pump FieF (300 aa).

Transmembrane regions (helical) follow at residues 12–32 (AAIA…FAWW), 39–59 (ILAA…NLLV), 82–102 (AALA…LTGI), and 114–134 (PGVG…LVSF). Residues D45 and D49 each contribute to the Zn(2+) site. Zn(2+)-binding residues include H153 and D157. A run of 2 helical transmembrane segments spans residues 156 to 176 (SDVM…YGWH) and 178 to 198 (ADAL…LRMG).

Belongs to the cation diffusion facilitator (CDF) transporter (TC 2.A.4) family. FieF subfamily. In terms of assembly, homodimer.

It localises to the cell inner membrane. It catalyses the reaction Zn(2+)(in) + H(+)(out) = Zn(2+)(out) + H(+)(in). The catalysed reaction is Cd(2+)(in) + H(+)(out) = Cd(2+)(out) + H(+)(in). It carries out the reaction Fe(2+)(in) + H(+)(out) = Fe(2+)(out) + H(+)(in). Functionally, divalent metal cation transporter which exports Zn(2+), Cd(2+) and possibly Fe(2+). May be involved in zinc and iron detoxification by efflux. The chain is Cation-efflux pump FieF from Shigella boydii serotype 18 (strain CDC 3083-94 / BS512).